A 573-amino-acid polypeptide reads, in one-letter code: Putative ABC transporter ATP-binding protein LJ_1704 (573 aa).

2 consecutive ABC transporter domains span residues 6 to 247 and 303 to 536; these read IEFK…GVRE and LKLD…ASLK. ATP contacts are provided by residues 40–47 and 337–344; these read GPSGSGKS and GQNGAGKT.

This sequence belongs to the ABC transporter superfamily.

It localises to the cell membrane. Functionally, probably part of an ABC transporter complex. Responsible for energy coupling to the transport system. The chain is Putative ABC transporter ATP-binding protein LJ_1704 from Lactobacillus johnsonii (strain CNCM I-12250 / La1 / NCC 533).